Consider the following 334-residue polypeptide: Large ribosomal subunit protein uL3 (334 aa).

Residues 1–10 show a composition bias toward basic residues; it reads MGMKKNRPRR. The interval 1 to 21 is disordered; that stretch reads MGMKKNRPRRGSLAFSPRKRA.

It belongs to the universal ribosomal protein uL3 family. In terms of assembly, part of the 50S ribosomal subunit. Forms a cluster with proteins L14 and L24e.

Functionally, one of the primary rRNA binding proteins, it binds directly near the 3'-end of the 23S rRNA, where it nucleates assembly of the 50S subunit. This is Large ribosomal subunit protein uL3 from Methanococcus maripaludis (strain C5 / ATCC BAA-1333).